The chain runs to 763 residues: Phosphoglycerol transferase I (763 aa).

4 helical membrane-spanning segments follow: residues 1-21, 26-46, 77-97, and 108-128; these read MSEL…AWKA, WWFA…ITLY, ILPG…LGWI, and VGYS…SPAF.

It belongs to the OpgB family.

It localises to the cell inner membrane. It carries out the reaction a phosphatidylglycerol + a membrane-derived-oligosaccharide D-glucose = a 1,2-diacyl-sn-glycerol + a membrane-derived-oligosaccharide 6-(glycerophospho)-D-glucose.. The protein operates within glycan metabolism; osmoregulated periplasmic glucan (OPG) biosynthesis. In terms of biological role, transfers a phosphoglycerol residue from phosphatidylglycerol to the membrane-bound nascent glucan backbones. The sequence is that of Phosphoglycerol transferase I from Salmonella agona (strain SL483).